We begin with the raw amino-acid sequence, 232 residues long: Phosphatidylserine decarboxylase proenzyme (232 aa).

Ser-190 serves as the catalytic Schiff-base intermediate with substrate; via pyruvic acid. Ser-190 carries the post-translational modification Pyruvic acid (Ser); by autocatalysis.

It belongs to the phosphatidylserine decarboxylase family. PSD-A subfamily. Heterodimer of a large membrane-associated beta subunit and a small pyruvoyl-containing alpha subunit. Pyruvate is required as a cofactor. In terms of processing, is synthesized initially as an inactive proenzyme. Formation of the active enzyme involves a self-maturation process in which the active site pyruvoyl group is generated from an internal serine residue via an autocatalytic post-translational modification. Two non-identical subunits are generated from the proenzyme in this reaction, and the pyruvate is formed at the N-terminus of the alpha chain, which is derived from the carboxyl end of the proenzyme. The post-translation cleavage follows an unusual pathway, termed non-hydrolytic serinolysis, in which the side chain hydroxyl group of the serine supplies its oxygen atom to form the C-terminus of the beta chain, while the remainder of the serine residue undergoes an oxidative deamination to produce ammonia and the pyruvoyl prosthetic group on the alpha chain.

The protein localises to the cell membrane. The catalysed reaction is a 1,2-diacyl-sn-glycero-3-phospho-L-serine + H(+) = a 1,2-diacyl-sn-glycero-3-phosphoethanolamine + CO2. The protein operates within phospholipid metabolism; phosphatidylethanolamine biosynthesis; phosphatidylethanolamine from CDP-diacylglycerol: step 2/2. Catalyzes the formation of phosphatidylethanolamine (PtdEtn) from phosphatidylserine (PtdSer). The polypeptide is Phosphatidylserine decarboxylase proenzyme (Rhodopseudomonas palustris (strain BisA53)).